Here is a 711-residue protein sequence, read N- to C-terminus: MLNPIVRKFQYGQHTVTLETGMMARQATAAVMVSMDDTAVFVTVVGAKKAKPGQDFFPLTINYQERTYAAGRIPGGFFRREGRPSEGETLIARLIDRPLRPLFPEGFVNEVQVIATVVSVNPQVNPDIVAMIGASAALSLSGIPFNGPIGAARVGYINDQYVLNPTQDELKSSKLDLVVAGTESAVLMVESEAELLSEDQMLGAVVFGHEQQQVVIQNINDLVKEAGKPRWDWQPEAANEALNARVKALAESRLSDAYRITDKQERYSQIDAIKADVIAALQAEQAEGDALDENELGDILHAIEKNVVRSRVLAGEPRIDGREKDMIRGLDVRTGVLPRTHGSALFTRGETQALVTATLGTERDAQNIDELMGERTDRFLFHYNFPPYSVGETGMVGSPKRREIGHGRLAKRGVLAVMPAADRFPYTVRVVSEITESNGSSSMASVCGASLALMDAGVPIKAAVAGIAMGLVKEGENFVVLSDILGDEDHLGDMDFKVAGSREGITALQMDIKIEGITKEIMQVALNQAKGARLHILGVMEQAINAPRGDISQFAPRIHTIKISPDKIKDVIGKGGSVIRALTEETGTTIEIEDDGTVKIAATDGEKAKHAIRRIEEITAEIEVGRIYNGKVTRIVDFGAFVAIGGGKEGLVHISQIADKRVEKVTDYLQMGQEVPVKVLEVDRQGRVRLSIKEATEQTQEAAAPAAPEAE.

The Mg(2+) site is built by Asp-489 and Asp-495. The KH domain occupies 556 to 615 (PRIHTIKISPDKIKDVIGKGGSVIRALTEETGTTIEIEDDGTVKIAATDGEKAKHAIRRI). In terms of domain architecture, S1 motif spans 625–693 (GRIYNGKVTR…RQGRVRLSIK (69 aa)).

Belongs to the polyribonucleotide nucleotidyltransferase family. In terms of assembly, component of the RNA degradosome, which is a multiprotein complex involved in RNA processing and mRNA degradation. Requires Mg(2+) as cofactor.

The protein localises to the cytoplasm. The catalysed reaction is RNA(n+1) + phosphate = RNA(n) + a ribonucleoside 5'-diphosphate. Involved in mRNA degradation. Catalyzes the phosphorolysis of single-stranded polyribonucleotides processively in the 3'- to 5'-direction. The sequence is that of Polyribonucleotide nucleotidyltransferase from Cronobacter sakazakii (strain ATCC BAA-894) (Enterobacter sakazakii).